A 245-amino-acid chain; its full sequence is NAD-dependent protein deacylase (245 aa).

One can recognise a Deacetylase sirtuin-type domain in the interval Met-1–His-237. Gly-13–Trp-32 is an NAD(+) binding site. Substrate is bound by residues Tyr-57 and Arg-60. Position 94–97 (Gln-94–Asp-97) interacts with NAD(+). The Proton acceptor role is filled by His-112. 2 residues coordinate Zn(2+): Cys-120 and Cys-139. Residues Gly-179 to Ser-181, Asn-205 to Glu-207, and Ala-223 each bind NAD(+).

It belongs to the sirtuin family. Class III subfamily. Zn(2+) serves as cofactor.

It is found in the cytoplasm. It catalyses the reaction N(6)-acetyl-L-lysyl-[protein] + NAD(+) + H2O = 2''-O-acetyl-ADP-D-ribose + nicotinamide + L-lysyl-[protein]. The catalysed reaction is N(6)-succinyl-L-lysyl-[protein] + NAD(+) + H2O = 2''-O-succinyl-ADP-D-ribose + nicotinamide + L-lysyl-[protein]. Its function is as follows. NAD-dependent lysine deacetylase and desuccinylase that specifically removes acetyl and succinyl groups on target proteins. Modulates the activities of several proteins which are inactive in their acylated form. The polypeptide is NAD-dependent protein deacylase (Vibrio vulnificus (strain CMCP6)).